We begin with the raw amino-acid sequence, 736 residues long: Subtilisin-like protease SBT4.6 (736 aa).

The first 24 residues, 1 to 24 (MATAVSYCLLSCIFALLVVSFASA), serve as a signal peptide directing secretion. Residues 25–111 (GKDDQDKQVY…VFPSKNLNLQ (87 aa)) constitute a propeptide, activation peptide. In terms of domain architecture, Inhibitor I9 spans 33 to 110 (VYIVYMGALP…SVFPSKNLNL (78 aa)). In terms of domain architecture, Peptidase S8 spans 115 to 589 (SWNFMGLKEG…AGHVDPIAAI (475 aa)). Residue Asp-143 is the Charge relay system of the active site. An N-linked (GlcNAc...) asparagine glycan is attached at Asn-174. His-204 acts as the Charge relay system in catalysis. An N-linked (GlcNAc...) asparagine glycan is attached at Asn-227. Residues 362-442 (KYPLVYGKSA…PVSVLSEDDY (81 aa)) form the PA domain. Residue Asn-450 is glycosylated (N-linked (GlcNAc...) asparagine). Ser-527 (charge relay system) is an active-site residue. N-linked (GlcNAc...) asparagine glycosylation is found at Asn-564, Asn-598, Asn-610, and Asn-668.

The protein belongs to the peptidase S8 family. In terms of processing, the C-terminal propeptide is autocleaved.

It localises to the secreted. The polypeptide is Subtilisin-like protease SBT4.6 (Arabidopsis thaliana (Mouse-ear cress)).